A 153-amino-acid chain; its full sequence is HTH-type transcriptional regulator Zrp (153 aa).

In terms of domain architecture, HTH asnC-type spans 2 to 63 (IDYRDRHILS…LLDRKKINLP (62 aa)). The H-T-H motif DNA-binding region spans 21-40 (LAEIAERVALSVSACSRRVA).

The protein is HTH-type transcriptional regulator Zrp (zrp) of Zymomonas mobilis subsp. mobilis (strain ATCC 10988 / DSM 424 / LMG 404 / NCIMB 8938 / NRRL B-806 / ZM1).